Here is a 124-residue protein sequence, read N- to C-terminus: Fluoride-specific ion channel FluC (124 aa).

4 consecutive transmembrane segments (helical) span residues L4–F24, F35–G55, I60–S80, and V102–S122. Na(+) contacts are provided by G74 and T77.

Belongs to the fluoride channel Fluc/FEX (TC 1.A.43) family.

Its subcellular location is the cell inner membrane. It carries out the reaction fluoride(in) = fluoride(out). Na(+) is not transported, but it plays an essential structural role and its presence is essential for fluoride channel function. Functionally, fluoride-specific ion channel. Important for reducing fluoride concentration in the cell, thus reducing its toxicity. The chain is Fluoride-specific ion channel FluC from Shewanella baltica (strain OS223).